The sequence spans 266 residues: Small ribosomal subunit protein mS42 (266 aa).

The protein belongs to the mitochondrion-specific ribosomal protein mS42 family. As to quaternary structure, component of the mitochondrial small ribosomal subunit (mt-SSU). Mature yeast 74S mitochondrial ribosomes consist of a small (37S) and a large (54S) subunit. The 37S small subunit contains a 15S ribosomal RNA (15S mt-rRNA) and 34 different proteins. The 54S large subunit contains a 21S rRNA (21S mt-rRNA) and 46 different proteins. mS42 forms a heterodimer with mS43, building a large protuberance adjacent to the mRNA channel exit in the mt-SSU body.

The protein localises to the mitochondrion. In terms of biological role, component of the mitochondrial ribosome (mitoribosome), a dedicated translation machinery responsible for the synthesis of mitochondrial genome-encoded proteins, including at least some of the essential transmembrane subunits of the mitochondrial respiratory chain. The mitoribosomes are attached to the mitochondrial inner membrane and translation products are cotranslationally integrated into the membrane. In Saccharomyces cerevisiae (strain ATCC 204508 / S288c) (Baker's yeast), this protein is Small ribosomal subunit protein mS42 (RSM26).